The chain runs to 477 residues: Aspartyl/glutamyl-tRNA(Asn/Gln) amidotransferase subunit B (477 aa).

Belongs to the GatB/GatE family. GatB subfamily. Heterotrimer of A, B and C subunits.

It carries out the reaction L-glutamyl-tRNA(Gln) + L-glutamine + ATP + H2O = L-glutaminyl-tRNA(Gln) + L-glutamate + ADP + phosphate + H(+). It catalyses the reaction L-aspartyl-tRNA(Asn) + L-glutamine + ATP + H2O = L-asparaginyl-tRNA(Asn) + L-glutamate + ADP + phosphate + 2 H(+). Its function is as follows. Allows the formation of correctly charged Asn-tRNA(Asn) or Gln-tRNA(Gln) through the transamidation of misacylated Asp-tRNA(Asn) or Glu-tRNA(Gln) in organisms which lack either or both of asparaginyl-tRNA or glutaminyl-tRNA synthetases. The reaction takes place in the presence of glutamine and ATP through an activated phospho-Asp-tRNA(Asn) or phospho-Glu-tRNA(Gln). The sequence is that of Aspartyl/glutamyl-tRNA(Asn/Gln) amidotransferase subunit B from Ureaplasma parvum serovar 3 (strain ATCC 27815 / 27 / NCTC 11736).